A 373-amino-acid polypeptide reads, in one-letter code: Queuine tRNA-ribosyltransferase (373 aa).

The active-site Proton acceptor is the Asp-90. Residues 90 to 94, Asp-144, Gln-193, and Gly-220 contribute to the substrate site; that span reads DSGGF. Residues 251-257 form an RNA binding region; it reads GVGTPED. Asp-270 functions as the Nucleophile in the catalytic mechanism. The tract at residues 275–279 is RNA binding; important for wobble base 34 recognition; sequence TRNAR. Positions 308, 310, 313, and 339 each coordinate Zn(2+).

Belongs to the queuine tRNA-ribosyltransferase family. Homodimer. Within each dimer, one monomer is responsible for RNA recognition and catalysis, while the other monomer binds to the replacement base PreQ1. Requires Zn(2+) as cofactor.

It carries out the reaction 7-aminomethyl-7-carbaguanine + guanosine(34) in tRNA = 7-aminomethyl-7-carbaguanosine(34) in tRNA + guanine. Its pathway is tRNA modification; tRNA-queuosine biosynthesis. Functionally, catalyzes the base-exchange of a guanine (G) residue with the queuine precursor 7-aminomethyl-7-deazaguanine (PreQ1) at position 34 (anticodon wobble position) in tRNAs with GU(N) anticodons (tRNA-Asp, -Asn, -His and -Tyr). Catalysis occurs through a double-displacement mechanism. The nucleophile active site attacks the C1' of nucleotide 34 to detach the guanine base from the RNA, forming a covalent enzyme-RNA intermediate. The proton acceptor active site deprotonates the incoming PreQ1, allowing a nucleophilic attack on the C1' of the ribose to form the product. After dissociation, two additional enzymatic reactions on the tRNA convert PreQ1 to queuine (Q), resulting in the hypermodified nucleoside queuosine (7-(((4,5-cis-dihydroxy-2-cyclopenten-1-yl)amino)methyl)-7-deazaguanosine). The polypeptide is Queuine tRNA-ribosyltransferase (Campylobacter jejuni subsp. jejuni serotype O:6 (strain 81116 / NCTC 11828)).